The following is a 285-amino-acid chain: NADPH-dependent 7-cyano-7-deazaguanine reductase (285 aa).

V80–S82 serves as a coordination point for substrate. Position 82–83 (S82–K83) interacts with NADPH. C191 (thioimide intermediate) is an active-site residue. Residue D198 is the Proton donor of the active site. H231–E232 provides a ligand contact to substrate. NADPH is bound at residue R260–G261.

This sequence belongs to the GTP cyclohydrolase I family. QueF type 2 subfamily. As to quaternary structure, homodimer.

It is found in the cytoplasm. The catalysed reaction is 7-aminomethyl-7-carbaguanine + 2 NADP(+) = 7-cyano-7-deazaguanine + 2 NADPH + 3 H(+). It functions in the pathway tRNA modification; tRNA-queuosine biosynthesis. In terms of biological role, catalyzes the NADPH-dependent reduction of 7-cyano-7-deazaguanine (preQ0) to 7-aminomethyl-7-deazaguanine (preQ1). This chain is NADPH-dependent 7-cyano-7-deazaguanine reductase, found in Psychrobacter arcticus (strain DSM 17307 / VKM B-2377 / 273-4).